The chain runs to 394 residues: NAD(P)H-quinone oxidoreductase subunit H (394 aa).

It belongs to the complex I 49 kDa subunit family. NDH-1 can be composed of about 15 different subunits; different subcomplexes with different compositions have been identified which probably have different functions.

It localises to the cellular thylakoid membrane. It catalyses the reaction a plastoquinone + NADH + (n+1) H(+)(in) = a plastoquinol + NAD(+) + n H(+)(out). The catalysed reaction is a plastoquinone + NADPH + (n+1) H(+)(in) = a plastoquinol + NADP(+) + n H(+)(out). In terms of biological role, NDH-1 shuttles electrons from an unknown electron donor, via FMN and iron-sulfur (Fe-S) centers, to quinones in the respiratory and/or the photosynthetic chain. The immediate electron acceptor for the enzyme in this species is believed to be plastoquinone. Couples the redox reaction to proton translocation, and thus conserves the redox energy in a proton gradient. Cyanobacterial NDH-1 also plays a role in inorganic carbon-concentration. In Nostoc punctiforme (strain ATCC 29133 / PCC 73102), this protein is NAD(P)H-quinone oxidoreductase subunit H.